The sequence spans 67 residues: Small ribosomal subunit protein eS17 (67 aa).

This sequence belongs to the eukaryotic ribosomal protein eS17 family.

This Haloquadratum walsbyi (strain DSM 16790 / HBSQ001) protein is Small ribosomal subunit protein eS17.